Here is a 397-residue protein sequence, read N- to C-terminus: Putative gustatory receptor 85a (397 aa).

Over 1-56 (MYSLIEAQLLGGKLVNRVMASLRRIIQRSLGYFCALNGILDFNTDIGTGNLRRYRV) the chain is Cytoplasmic. The helical transmembrane segment at 57–77 (LFMYRLLHNFAVISLTLKFLF) threads the bilayer. Over 78 to 90 (DFTDHFKYIESST) the chain is Extracellular. A helical membrane pass occupies residues 91–111 (LITVNFFTYFTLVFFALLSSM). Over 112–151 (GSCYQWQNRILAVLKELKHQRDLSRHMGYRVPRSKQNSID) the chain is Cytoplasmic. Residues 152 to 172 (YLLFALTVLLILRLSIHLATF) traverse the membrane as a helical segment. At 173-186 (TLSARMGFNHPCNC) the chain is on the extracellular side. The helical transmembrane segment at 187–207 (FLPECMIFSMNYLLFAILAEI) threads the bilayer. Topologically, residues 208–268 (TRCWWSLQSG…RYVTLAYMAR (61 aa)) are cytoplasmic. Residues 269–289 (NLWSGIVAGYLLVRFVIGNGL) form a helical membrane-spanning segment. Residues 290-293 (QDVE) lie on the Extracellular side of the membrane. The helical transmembrane segment at 294 to 314 (LVYLVFSFITCIQPLMLSLLV) threads the bilayer. Residues 315 to 375 (NSMTSTTGSL…FRINRSLAFR (61 aa)) are Cytoplasmic-facing. Residues 376 to 396 (SASLILVHVLYMVQSDYISIT) traverse the membrane as a helical segment. Residue N397 is a topological domain, extracellular.

This sequence belongs to the insect chemoreceptor superfamily. Gustatory receptor (GR) family. Gr22e subfamily.

The protein localises to the cell membrane. In terms of biological role, probable gustatory receptor which mediates acceptance or avoidance behavior, depending on its substrates. This chain is Putative gustatory receptor 85a (Gr85a), found in Drosophila melanogaster (Fruit fly).